The chain runs to 87 residues: Small ribosomal subunit protein bS20 (87 aa).

Residues 1 to 27 form a disordered region; it reads MANSVQATKRARQAEKHRQHNAGMRAA. Residues 9 to 20 are compositionally biased toward basic residues; sequence KRARQAEKHRQH.

This sequence belongs to the bacterial ribosomal protein bS20 family.

Binds directly to 16S ribosomal RNA. In Hydrogenovibrio crunogenus (strain DSM 25203 / XCL-2) (Thiomicrospira crunogena), this protein is Small ribosomal subunit protein bS20.